Consider the following 152-residue polypeptide: Protein NrdI (152 aa).

Belongs to the NrdI family.

In terms of biological role, probably involved in ribonucleotide reductase function. This Mycolicibacterium vanbaalenii (strain DSM 7251 / JCM 13017 / BCRC 16820 / KCTC 9966 / NRRL B-24157 / PYR-1) (Mycobacterium vanbaalenii) protein is Protein NrdI.